The chain runs to 370 residues: Natural killer cell receptor 2B4 (370 aa).

An N-terminal signal peptide occupies residues 1–21 (MLGQVVTLILLLLLKVYQGKG). Ig-like domains are found at residues 22–127 (CQGS…FVFE) and 131–215 (PDKV…LNLT). Residues 22–229 (CQGSADHVVS…NAHQEFRFWP (208 aa)) are Extracellular-facing. N71, N77, N89, N164, N181, N192, N200, and N213 each carry an N-linked (GlcNAc...) asparagine glycan. C157 and C199 are joined by a disulfide. Residues 230 to 250 (FLVIIVILSALFLGTLACFCV) traverse the membrane as a helical segment. Residues 251 to 370 (WRRKRKEKQS…KELENFDVYS (120 aa)) are Cytoplasmic-facing. 4 consecutive short sequence motifs (ITSM) follow at residues 269–274 (TIYEDV), 295–300 (TIYSMI), 315–320 (TLYSLI), and 340–345 (TIYEVI). Y271 carries the post-translational modification Phosphotyrosine. A Phosphotyrosine; by FYN modification is found at Y297. The residue at position 317 (Y317) is a Phosphotyrosine. A disordered region spans residues 324–370 (RKSGSRKRNHSPSFNSTIYEVIGKSQPKAQNPARLSRKELENFDVYS). Position 342 is a phosphotyrosine; by FYN (Y342).

Interacts with CD48. Interacts (via phosphorylated ITSM 1-4) with SH2D1A (via SH2 domain); SH2D1A probably mediates association with FYN. Interacts (via phosphorylated ITSM 3) with PTPN11/SHP-2, INPP5D/SHIP1, PTPN6/SHP-1 and CSK; binding of SH2D1A/SAP prevents association with PTPN11, PTPN6 and CSK; conflictingly a similar association has been described for phosphorylated ITSM 1 also including GRB2 and PLCG1. Interacts weakly (via phosphorylated ITSM 2) with PTPN11/SHP-2 and CSK. Interacts with SH2D1B. Interacts with PIK3R1; PI3K recruits SH2D1A. Interacts with MHC class I proteins; the interaction is proposed to prevent self-killing of NK cells. In terms of processing, N-linked glycosylation is essential for the binding to its ligand CD48. Also O-glycosylated, in contrast, O-linked sialylation has a negative impact on ligand binding. Phosphorylated by FYN and CSK on tyrosine residues following activation. Coligation with inhibitory receptors such as KIR2DL1 inhibits phosphorylation upon contact of NK cells with sensitive target cells. In terms of tissue distribution, expressed in spleen, PBL, followed by lung, liver, testis and small intestine. Expressed in all natural killer (NK) cells, monocytes and basophils, TCR-gamma/delta+ T-cells, monocytes, basophils, and on a subset of CD8(+) T-cells.

Its subcellular location is the membrane. It is found in the cell membrane. The protein localises to the membrane raft. In terms of biological role, heterophilic receptor of the signaling lymphocytic activation molecule (SLAM) family; its ligand is CD48. SLAM receptors triggered by homo- or heterotypic cell-cell interactions are modulating the activation and differentiation of a wide variety of immune cells and thus are involved in the regulation and interconnection of both innate and adaptive immune response. Activities are controlled by presence or absence of small cytoplasmic adapter proteins, SH2D1A/SAP and/or SH2D1B/EAT-2. Acts as activating natural killer (NK) cell receptor. Activating function implicates association with SH2D1A and FYN. Downstreaming signaling involves predominantly VAV1, and, to a lesser degree, INPP5D/SHIP1 and CBL. Signal attenuation in the absence of SH2D1A is proposed to be dependent on INPP5D and to a lesser extent PTPN6/SHP-1 and PTPN11/SHP-2. Stimulates NK cell cytotoxicity, production of IFN-gamma and granule exocytosis. Optimal expansion and activation of NK cells seems to be dependent on the engagement of CD244 with CD48 expressed on neighboring NK cells. Acts as costimulator in NK activation by enhancing signals by other NK receptors such as NCR3 and NCR1. At early stages of NK cell differentiation may function as an inhibitory receptor possibly ensuring the self-tolerance of developing NK cells. Involved in the regulation of CD8(+) T-cell proliferation; expression on activated T-cells and binding to CD48 provides costimulatory-like function for neighboring T-cells. Inhibits inflammatory responses in dendritic cells (DCs). This chain is Natural killer cell receptor 2B4 (CD244), found in Homo sapiens (Human).